The primary structure comprises 295 residues: Pyridoxal 5'-phosphate synthase subunit PdxS (295 aa).

D-ribose 5-phosphate is bound at residue Asp-25. Lys-82 serves as the catalytic Schiff-base intermediate with D-ribose 5-phosphate. Residue Gly-154 coordinates D-ribose 5-phosphate. Arg-166 lines the D-glyceraldehyde 3-phosphate pocket. D-ribose 5-phosphate-binding positions include Gly-215 and 236-237 (GS).

This sequence belongs to the PdxS/SNZ family. In the presence of PdxT, forms a dodecamer of heterodimers.

The catalysed reaction is aldehydo-D-ribose 5-phosphate + D-glyceraldehyde 3-phosphate + L-glutamine = pyridoxal 5'-phosphate + L-glutamate + phosphate + 3 H2O + H(+). It participates in cofactor biosynthesis; pyridoxal 5'-phosphate biosynthesis. Functionally, catalyzes the formation of pyridoxal 5'-phosphate from ribose 5-phosphate (RBP), glyceraldehyde 3-phosphate (G3P) and ammonia. The ammonia is provided by the PdxT subunit. Can also use ribulose 5-phosphate and dihydroxyacetone phosphate as substrates, resulting from enzyme-catalyzed isomerization of RBP and G3P, respectively. In Actinobacillus pleuropneumoniae serotype 3 (strain JL03), this protein is Pyridoxal 5'-phosphate synthase subunit PdxS.